We begin with the raw amino-acid sequence, 602 residues long: Aspartate--tRNA(Asp/Asn) ligase (602 aa).

Glu170 is a binding site for L-aspartate. The interval Gln194–Lys197 is aspartate. Position 216 (Arg216) interacts with L-aspartate. Residues Arg216–Glu218 and Gln225 contribute to the ATP site. His448 is an L-aspartate binding site. Residue Glu482 coordinates ATP. An L-aspartate-binding site is contributed by Arg489. Gly534 to Arg537 is an ATP binding site. The segment at Gly559 to Lys602 is disordered. The span at Gln575–Gly589 shows a compositional bias: basic and acidic residues.

This sequence belongs to the class-II aminoacyl-tRNA synthetase family. Type 1 subfamily. Homodimer.

The protein localises to the cytoplasm. It catalyses the reaction tRNA(Asx) + L-aspartate + ATP = L-aspartyl-tRNA(Asx) + AMP + diphosphate. Aspartyl-tRNA synthetase with relaxed tRNA specificity since it is able to aspartylate not only its cognate tRNA(Asp) but also tRNA(Asn). Reaction proceeds in two steps: L-aspartate is first activated by ATP to form Asp-AMP and then transferred to the acceptor end of tRNA(Asp/Asn). The protein is Aspartate--tRNA(Asp/Asn) ligase of Rhodococcus opacus (strain B4).